The following is a 159-amino-acid chain: Small ribosomal subunit protein uS5c (159 aa).

The S5 DRBM domain occupies 17–80 (WEERVVSVQR…TDGKKNVITV (64 aa)).

Belongs to the universal ribosomal protein uS5 family. In terms of assembly, part of the 30S ribosomal subunit. Contacts protein S4.

It is found in the plastid. Its subcellular location is the chloroplast. Its function is as follows. With S4 and S12 plays an important role in translational accuracy. The sequence is that of Small ribosomal subunit protein uS5c (rps5) from Emiliania huxleyi (Coccolithophore).